We begin with the raw amino-acid sequence, 559 residues long: 5'-AMP-activated protein kinase catalytic subunit alpha-1 (559 aa).

The Protein kinase domain occupies 27–279; it reads YILGDTLGVG…IKDIREHEWF (253 aa). At threonine 32 the chain carries Phosphothreonine. Residues 33–41 and lysine 56 each bind ATP; that span reads LGVGTFGKV. Aspartate 150 functions as the Proton acceptor in the catalytic mechanism. Threonine 183 is subject to Phosphothreonine; by LKB1 and CaMKK2. Residues threonine 269 and threonine 355 each carry the phosphothreonine modification. Residues 302–381 form an AIS region; that stretch reads EALKEVCEKF…PERVPFLVAE (80 aa). Serine 356 carries the phosphoserine modification. A Phosphoserine; by ULK1 modification is found at serine 360. At threonine 368 the chain carries Phosphothreonine; by ULK1. Residue threonine 382 is modified to Phosphothreonine. Serine 397, serine 467, and serine 486 each carry phosphoserine. Positions 485–505 are enriched in polar residues; sequence KSGTATPQRSGSVSNYRSCQR. Residues 485–536 form a disordered region; it reads KSGTATPQRSGSVSNYRSCQRSDSDAEAQGKSSEVSLTSSVTSLDSSPVDLT. Threonine 488 and threonine 490 each carry phosphothreonine. Phosphoserine occurs at positions 496, 508, 524, and 527. Over residues 516–535 the composition is skewed to low complexity; sequence SSEVSLTSSVTSLDSSPVDL.

This sequence belongs to the protein kinase superfamily. CAMK Ser/Thr protein kinase family. SNF1 subfamily. AMPK is a heterotrimer of an alpha catalytic subunit (PRKAA1 or PRKAA2), a beta (PRKAB1 or PRKAB2) and a gamma non-catalytic subunits (PRKAG1, PRKAG2 or PRKAG3). Interacts with FNIP1 and FNIP2. As to quaternary structure, (Microbial infection) Interacts with Dengue type 2 virus non-structural protein 1; this interaction promotes the AMPK/ERK/mTOR signaling pathway to induce autophagy. The cofactor is Mg(2+). Ubiquitinated. Post-translationally, phosphorylated at Thr-183 by STK11/LKB1 in complex with STE20-related adapter-alpha (STRADA) pseudo kinase and CAB39. Also phosphorylated at Thr-183 by CAMKK2; triggered by a rise in intracellular calcium ions, without detectable changes in the AMP/ATP ratio. CAMKK1 can also phosphorylate Thr-183, but at a much lower level. Dephosphorylated by protein phosphatase 2A and 2C (PP2A and PP2C). Phosphorylated by ULK1 and ULK2; leading to negatively regulate AMPK activity and suggesting the existence of a regulatory feedback loop between ULK1, ULK2 and AMPK. Dephosphorylated by PPM1A and PPM1B. In terms of processing, glycosylated; O-GlcNAcylated by OGT, promoting the AMP-activated protein kinase (AMPK) activity.

Its subcellular location is the cytoplasm. The protein localises to the nucleus. The enzyme catalyses L-seryl-[protein] + ATP = O-phospho-L-seryl-[protein] + ADP + H(+). It carries out the reaction L-threonyl-[protein] + ATP = O-phospho-L-threonyl-[protein] + ADP + H(+). It catalyses the reaction L-seryl-[acetyl-CoA carboxylase] + ATP = O-phospho-L-seryl-[acetyl-CoA carboxylase] + ADP + H(+). The catalysed reaction is L-seryl-[3-hydroxy-3-methylglutaryl-coenzyme A reductase] + ATP = O-phospho-L-seryl-[3-hydroxy-3-methylglutaryl-coenzyme A reductase] + ADP + H(+). The enzyme catalyses L-seryl-[tau protein] + ATP = O-phospho-L-seryl-[tau protein] + ADP + H(+). It carries out the reaction L-threonyl-[tau protein] + ATP = O-phospho-L-threonyl-[tau protein] + ADP + H(+). With respect to regulation, activated by phosphorylation on Thr-183. Binding of AMP to non-catalytic gamma subunit (PRKAG1, PRKAG2 or PRKAG3) results in allosteric activation, inducing phosphorylation on Thr-183. AMP-binding to gamma subunit also sustains activity by preventing dephosphorylation of Thr-183. ADP also stimulates Thr-183 phosphorylation, without stimulating already phosphorylated AMPK. ATP promotes dephosphorylation of Thr-183, rendering the enzyme inactive. Under physiological conditions AMPK mainly exists in its inactive form in complex with ATP, which is much more abundant than AMP. AMPK is activated by antihyperglycemic drug metformin, a drug prescribed to patients with type 2 diabetes: in vivo, metformin seems to mainly inhibit liver gluconeogenesis. However, metformin can be used to activate AMPK in muscle and other cells in culture or ex vivo. Selectively inhibited by compound C (6-[4-(2-Piperidin-1-yl-ethoxy)-phenyl)]-3-pyridin-4-yl-pyyrazolo[1,5-a] pyrimidine. Activated by resveratrol, a natural polyphenol present in red wine, and S17834, a synthetic polyphenol. Functionally, catalytic subunit of AMP-activated protein kinase (AMPK), an energy sensor protein kinase that plays a key role in regulating cellular energy metabolism. In response to reduction of intracellular ATP levels, AMPK activates energy-producing pathways and inhibits energy-consuming processes: inhibits protein, carbohydrate and lipid biosynthesis, as well as cell growth and proliferation. AMPK acts via direct phosphorylation of metabolic enzymes, and by longer-term effects via phosphorylation of transcription regulators. Regulates lipid synthesis by phosphorylating and inactivating lipid metabolic enzymes such as ACACA, ACACB, GYS1, HMGCR and LIPE; regulates fatty acid and cholesterol synthesis by phosphorylating acetyl-CoA carboxylase (ACACA and ACACB) and hormone-sensitive lipase (LIPE) enzymes, respectively. Promotes lipolysis of lipid droplets by mediating phosphorylation of isoform 1 of CHKA (CHKalpha2). Regulates insulin-signaling and glycolysis by phosphorylating IRS1, PFKFB2 and PFKFB3. AMPK stimulates glucose uptake in muscle by increasing the translocation of the glucose transporter SLC2A4/GLUT4 to the plasma membrane, possibly by mediating phosphorylation of TBC1D4/AS160. Regulates transcription and chromatin structure by phosphorylating transcription regulators involved in energy metabolism such as CRTC2/TORC2, FOXO3, histone H2B, HDAC5, MEF2C, MLXIPL/ChREBP, EP300, HNF4A, p53/TP53, SREBF1, SREBF2 and PPARGC1A. Acts as a key regulator of glucose homeostasis in liver by phosphorylating CRTC2/TORC2, leading to CRTC2/TORC2 sequestration in the cytoplasm. In response to stress, phosphorylates 'Ser-36' of histone H2B (H2BS36ph), leading to promote transcription. Acts as a key regulator of cell growth and proliferation by phosphorylating FNIP1, TSC2, RPTOR, WDR24 and ATG1/ULK1: in response to nutrient limitation, negatively regulates the mTORC1 complex by phosphorylating RPTOR component of the mTORC1 complex and by phosphorylating and activating TSC2. Also phosphorylates and inhibits GATOR2 subunit WDR24 in response to nutrient limitation, leading to suppress glucose-mediated mTORC1 activation. In response to energetic stress, phosphorylates FNIP1, inactivating the non-canonical mTORC1 signaling, thereby promoting nuclear translocation of TFEB and TFE3, and inducing transcription of lysosomal or autophagy genes. In response to nutrient limitation, promotes autophagy by phosphorylating and activating ATG1/ULK1. In that process, it also activates WDR45/WIPI4. Phosphorylates CASP6, thereby preventing its autoprocessing and subsequent activation. In response to nutrient limitation, phosphorylates transcription factor FOXO3 promoting FOXO3 mitochondrial import. Also acts as a regulator of cellular polarity by remodeling the actin cytoskeleton; probably by indirectly activating myosin. AMPK also acts as a regulator of circadian rhythm by mediating phosphorylation of CRY1, leading to destabilize it. May regulate the Wnt signaling pathway by phosphorylating CTNNB1, leading to stabilize it. Also has tau-protein kinase activity: in response to amyloid beta A4 protein (APP) exposure, activated by CAMKK2, leading to phosphorylation of MAPT/TAU; however the relevance of such data remains unclear in vivo. Also phosphorylates CFTR, EEF2K, KLC1, NOS3 and SLC12A1. Regulates hepatic lipogenesis. Activated via SIRT3, represses sterol regulatory element-binding protein (SREBP) transcriptional activities and ATP-consuming lipogenesis to restore cellular energy balance. Upon stress, regulates mitochondrial fragmentation through phosphorylation of MTFR1L. The polypeptide is 5'-AMP-activated protein kinase catalytic subunit alpha-1 (Homo sapiens (Human)).